The chain runs to 493 residues: Cytoplasmic tRNA 2-thiolation protein 2 (493 aa).

A Phosphoserine modification is found at S489.

It belongs to the CTU2/NCS2 family. Interacts with NCS6 and URM1. May act by forming a heterodimer with NCS6.

Its subcellular location is the cytoplasm. Its pathway is tRNA modification; 5-methoxycarbonylmethyl-2-thiouridine-tRNA biosynthesis. Plays a central role in 2-thiolation of mcm(5)S(2)U at tRNA wobble positions of tRNA(Lys), tRNA(Glu) and tRNA(Gln). May act by forming a heterodimer with NCS6 that ligates sulfur from thiocarboxylated URM1 onto the uridine of tRNAs at wobble position. Prior mcm(5) tRNA modification by the elongator complex is required for 2-thiolation. May also be involved in protein urmylation. The chain is Cytoplasmic tRNA 2-thiolation protein 2 from Saccharomyces cerevisiae (strain YJM789) (Baker's yeast).